The chain runs to 212 residues: Pyridoxine/pyridoxamine 5'-phosphate oxidase (212 aa).

Substrate is bound by residues 8–11 (RRTY) and Lys-66. FMN-binding positions include 61 to 66 (RIVLLK), 76 to 77 (FT), Arg-82, Lys-83, and Gln-105. Substrate-binding residues include Tyr-123, Arg-127, and Ser-131. FMN contacts are provided by residues 140–141 (QS) and Trp-184. A substrate-binding site is contributed by 190 to 192 (RLH). Position 194 (Arg-194) interacts with FMN.

This sequence belongs to the pyridoxamine 5'-phosphate oxidase family. Homodimer. It depends on FMN as a cofactor.

The enzyme catalyses pyridoxamine 5'-phosphate + O2 + H2O = pyridoxal 5'-phosphate + H2O2 + NH4(+). It catalyses the reaction pyridoxine 5'-phosphate + O2 = pyridoxal 5'-phosphate + H2O2. It participates in cofactor metabolism; pyridoxal 5'-phosphate salvage; pyridoxal 5'-phosphate from pyridoxamine 5'-phosphate: step 1/1. The protein operates within cofactor metabolism; pyridoxal 5'-phosphate salvage; pyridoxal 5'-phosphate from pyridoxine 5'-phosphate: step 1/1. In terms of biological role, catalyzes the oxidation of either pyridoxine 5'-phosphate (PNP) or pyridoxamine 5'-phosphate (PMP) into pyridoxal 5'-phosphate (PLP). In Cupriavidus taiwanensis (strain DSM 17343 / BCRC 17206 / CCUG 44338 / CIP 107171 / LMG 19424 / R1) (Ralstonia taiwanensis (strain LMG 19424)), this protein is Pyridoxine/pyridoxamine 5'-phosphate oxidase.